The sequence spans 307 residues: MATH domain and coiled-coil domain-containing protein At3g58380 (307 aa).

An MATH domain is found at 6 to 132 (DKKFVWVIKD…CREITIVIEV (127 aa)). Residues 238-290 (KVDWLEKKLKEVKEKKKNVDNGKARLQQIEEDLQKLNQKRLDLKDILDKEKAN) are a coiled coil.

The polypeptide is MATH domain and coiled-coil domain-containing protein At3g58380 (Arabidopsis thaliana (Mouse-ear cress)).